The following is a 305-amino-acid chain: Glycine--tRNA ligase alpha subunit (305 aa).

The protein belongs to the class-II aminoacyl-tRNA synthetase family. In terms of assembly, tetramer of two alpha and two beta subunits.

The protein localises to the cytoplasm. The enzyme catalyses tRNA(Gly) + glycine + ATP = glycyl-tRNA(Gly) + AMP + diphosphate. In Streptococcus pneumoniae serotype 4 (strain ATCC BAA-334 / TIGR4), this protein is Glycine--tRNA ligase alpha subunit.